The chain runs to 355 residues: N-acylethanolamine-hydrolyzing acid amidase (355 aa).

The N-terminal stretch at 1 to 17 is a signal peptide; the sequence is MLLLQIILLLLPVICSA. Residue cysteine 122 is the Nucleophile of the active site. Asparagine 150, asparagine 160, and asparagine 328 each carry an N-linked (GlcNAc...) asparagine glycan.

It belongs to the acid ceramidase family. As to quaternary structure, heterodimer of an alpha and a beta subunit, produced by autocatalytic cleavage. N-glycosylated. Post-translationally, autoproteolytic cleavage at pH 4.5 gives rise to the alpha and beta subunit. Cleavage gives rise to a conformation change that activates the enzyme. The same catalytic Cys residue mediates the autoproteolytic cleavage and subsequent hydrolysis of lipid substrates.

Its subcellular location is the lysosome. It localises to the membrane. It carries out the reaction N-hexadecanoylethanolamine + H2O = ethanolamine + hexadecanoate. It catalyses the reaction an N-(long-chain fatty acyl)ethanolamine + H2O = a long-chain fatty acid + ethanolamine. It functions in the pathway lipid metabolism; fatty acid metabolism. Functionally, degrades bioactive fatty acid amides, such as N-palmitoylethanolamine, to ethanolamine and free fatty acids. The polypeptide is N-acylethanolamine-hydrolyzing acid amidase (Caenorhabditis elegans).